Here is a 190-residue protein sequence, read N- to C-terminus: RNA pyrophosphohydrolase (190 aa).

One can recognise a Nudix hydrolase domain in the interval 6–149; sequence GYRPNVGIIL…KRDVYTQALN (144 aa). Positions 38–59 match the Nudix box motif; sequence GGIKYGESPVQAMYRELHEEVG. Residues 167–190 are disordered; sequence QRVHGPRSTDSPSSETDGHAHIAG.

The protein belongs to the Nudix hydrolase family. RppH subfamily. Requires a divalent metal cation as cofactor.

Its function is as follows. Accelerates the degradation of transcripts by removing pyrophosphate from the 5'-end of triphosphorylated RNA, leading to a more labile monophosphorylated state that can stimulate subsequent ribonuclease cleavage. The sequence is that of RNA pyrophosphohydrolase from Bordetella pertussis (strain Tohama I / ATCC BAA-589 / NCTC 13251).